The sequence spans 95 residues: Large ribosomal subunit protein uL23c (95 aa).

Belongs to the universal ribosomal protein uL23 family. As to quaternary structure, part of the 50S ribosomal subunit.

It localises to the plastid. Its subcellular location is the chloroplast. In terms of biological role, binds to 23S rRNA. In Guillardia theta (Cryptophyte), this protein is Large ribosomal subunit protein uL23c (rpl23).